We begin with the raw amino-acid sequence, 1455 residues long: DNA-directed RNA polymerase subunit beta (1455 aa).

The protein belongs to the RNA polymerase beta chain family. As to quaternary structure, the RNAP catalytic core consists of 2 alpha, 1 beta, 1 beta' and 1 omega subunit. When a sigma factor is associated with the core the holoenzyme is formed, which can initiate transcription.

The catalysed reaction is RNA(n) + a ribonucleoside 5'-triphosphate = RNA(n+1) + diphosphate. DNA-dependent RNA polymerase catalyzes the transcription of DNA into RNA using the four ribonucleoside triphosphates as substrates. In Rhizorhabdus wittichii (strain DSM 6014 / CCUG 31198 / JCM 15750 / NBRC 105917 / EY 4224 / RW1) (Sphingomonas wittichii), this protein is DNA-directed RNA polymerase subunit beta.